A 282-amino-acid polypeptide reads, in one-letter code: Formate channel FocB (282 aa).

Residues 1 to 35 (MRNKLSFDLQLSARKAAIAERIAAHKIARSKVSVF) are Cytoplasmic-facing. A helical transmembrane segment spans residues 36–56 (LMAMSAGVFMAIGFTFYLSVI). The Periplasmic segment spans residues 57 to 68 (ADAPSSQALTHL). The helical transmembrane segment at 69-89 (VGGLCFTLGFILLAVCGTSLF) threads the bilayer. Topologically, residues 90-112 (TSSVMTVMAKSRGVISWRTWLIN) are cytoplasmic. Residues 113–133 (ALLVACGNLAGIACFSLLIWF) form a helical membrane-spanning segment. The Periplasmic segment spans residues 134 to 163 (SGLVMSENAMWGVAVLHCAEGKMHHTFTES). A helical transmembrane segment spans residues 164–184 (VSLGIMCNLMVCLALWMSYCG). Residues 185 to 190 (RSLCDK) are Cytoplasmic-facing. The chain crosses the membrane as a helical span at residues 191 to 211 (IVAMILPITLFVASGFEHCIA). Over 212-248 (NLFVIPFAIAIRHFAPPPFWQLAHSSADNFPALTVSH) the chain is Periplasmic. A helical transmembrane segment spans residues 249 to 269 (FITANLLPVMLGNIIGGAVLV). At 270 to 282 (SMCYRAIYLRQEP) the chain is on the cytoplasmic side.

The protein belongs to the FNT transporter (TC 1.A.16) family.

Its subcellular location is the cell inner membrane. The catalysed reaction is formate(in) = formate(out). The direction of formate translocation depends on external pH and electron donor source. Its function is as follows. Involved in the bidirectional transport of formate during mixed-acid fermentation. The polypeptide is Formate channel FocB (Escherichia coli (strain K12)).